The sequence spans 211 residues: ATP phosphoribosyltransferase (211 aa).

The protein belongs to the ATP phosphoribosyltransferase family. Short subfamily. In terms of assembly, heteromultimer composed of HisG and HisZ subunits.

Its subcellular location is the cytoplasm. It catalyses the reaction 1-(5-phospho-beta-D-ribosyl)-ATP + diphosphate = 5-phospho-alpha-D-ribose 1-diphosphate + ATP. It functions in the pathway amino-acid biosynthesis; L-histidine biosynthesis; L-histidine from 5-phospho-alpha-D-ribose 1-diphosphate: step 1/9. Functionally, catalyzes the condensation of ATP and 5-phosphoribose 1-diphosphate to form N'-(5'-phosphoribosyl)-ATP (PR-ATP). Has a crucial role in the pathway because the rate of histidine biosynthesis seems to be controlled primarily by regulation of HisG enzymatic activity. The polypeptide is ATP phosphoribosyltransferase (Bacillus cereus (strain ATCC 10987 / NRS 248)).